We begin with the raw amino-acid sequence, 1697 residues long: MNFFRFPVQLQLLISTVLGPCLGLEFTGLQGQWARYLRWDASTRSDLSFQFKTDVSTALILYFDDGGFCDFLQLMVVEGKLQLQFSIDCAETTVVSDKRVNDSSWHSATLSRYNLRTVLGLDGVSKWAEVRPLRQYMKIVSDLFLGGVPQDIRISVLTLPTVKDLPPFKGIIRELKYNSKEPILLSSQRVRMDIEGICMENPCENGGTCSVVDGEPLCDCSKTEYVGRFCNEEANNIPGFAHMMMADQAKGKAREENVATFRGSEFFCYDLSQNPIQSSSDEITLSFKTWQRNGLILHTGKSADYVNLALKDGAVSLVINLGSGAFEAIVEPVNGKFNDNSWHDVKVTRNLRQHSGIGHAMVNKLHCLVTISVDGILTTTGYTQEDYTMLGSDDFFYVGGSPSTADLPGSPVSNNFMGCLKEVVYKNNDIRLELSRLARIVDPKMKIQGDVVFKCENVATLDPISFETPEAYISLPKWNTKRMGSISFDFRTTEPNGLILFTHGKPQERKDARSQKNTKVDFFAVELLDGSLYLLLDMGSGTIKVKATQNKVNDGAWYHVDIQRDGRSGTISVNSRRTPFTASGENEILDLEGDMYLGGLPDSRGSLILPTELWTAMLNYGYVGCIRDLFIDGRSKDIRQIAEAQNGAGIKPSCNKMSGKQCDSYPCKNKGLCKEGWNRFICDCTGTGYWSRTCEREASILSYDGSMYMKVVMPTVMHTEAEDVSLRFMSQRAYGLLMATTSRDSADTLRLELDGSRVKLTVNLDCIRINCNSSKGPETLYAGQKLNDNEWHTVRVIRRGKSYKLTVDDDVAEGQMVGDHTRLEFHNIETGVMTERRFVSMIPSSFIGHLQSLKFNGLLYIDLCKNGDIDFCELNARFGMRSIIADPVTFKSKNSYLSLATLQAYTSMHLFFQFKTTSADGFILFNSGDGSDFIAVELVKGYIHYVFNLGNGPNVIKGNSERALHDNQWHNVVITRDNSNVHTLKVDAKAVSQVVNGAKNLDLKGDLFIAGLGPNMYNNLPKLVASREGFKGCLASVDLNGRLPDLINDALFRSGQIERGCEVGFTKADLKGPSTTCQEDSCANMGICIQQWENYTCDCSMTSYTGTHCNDPGTTYIFGKGGGLISFNWPANERPSTRTDRLTVGFSTSLKDGILIRIDSAPGLGDYLMLHIEQGKIGVTFNIGTADITVQESSTAVNDGKYHVVRFTRNGGNATLQVDNWAINEHFPSGNSDNERIQMANKKIPFKYARPVEEWLQEKGRQLTIFNTQATITIGGSDRKRPFQGQLSGLYYNGLKVLNMAAQGNPNIKINGSVRLVGEVPAAGSARTTALPPEMSTAFIETTTTMSTTTTRKHRTPPTIQTTDDMVSSAECSSDDEDFAECEGHAGGLGGELVFPVIVKDPLELPSVATRTPSIPFPPTLTIIETTKESLSMATEAGVPCLSDGGSDDCGDDDDDDDDDGLMISGYGSGEAYDSNLPPTDDEDFYTTFSLVTDKTLSSSTFEGGYKAHAPKWGSKDFRPNKVFDSGRTTTASFSPKLSRSTTTSTPPKLPAGKMNHRELKPQPDIVLLPLPTSYEVDNTKMKSPLITSPMFRNVPTAIPTEPGIRRVPGASEVVRESSSTTGMVVGIVAAAALCILILLYAMYKYRNRDEGSYQVDETRNYITNSAQSNGAVMKDKQQSTKSGNKKQKNKDKEYYV.

An N-terminal signal peptide occupies residues 1–23; the sequence is MNFFRFPVQLQLLISTVLGPCLG. The Laminin G-like 1 domain occupies 24-198; sequence LEFTGLQGQW…RVRMDIEGIC (175 aa). The Extracellular segment spans residues 24-1622; it reads LEFTGLQGQW…EVVRESSSTT (1599 aa). The EGF-like 1 domain maps to 194 to 231; sequence IEGICMENPCENGGTCSVVDGEPLCDCSKTEYVGRFCN. Intrachain disulfides connect C198–C209, C203–C218, and C220–C230. Laminin G-like domains lie at 258–455 and 462–654; these read VATF…VFKC and DPIS…KPSC. Residues D304, L321, and M389 each coordinate Ca(2+). 5 disulfide bridges follow: C419–C455, C625–C654, C662–C673, C667–C682, and C684–C694. The 38-residue stretch at 658 to 695 folds into the EGF-like 2 domain; it reads SGKQCDSYPCKNKGLCKEGWNRFICDCTGTGYWSRTCE. 2 consecutive Laminin G-like domains span residues 700-872 and 886-1061; these read ILSY…IDFC and DPVT…ERGC. Cystine bridges form between C1033/C1061, C1077/C1088, C1082/C1097, and C1099/C1109. The EGF-like 3 domain maps to 1073 to 1110; the sequence is PSTTCQEDSCANMGICIQQWENYTCDCSMTSYTGTHCN. Residues 1114 to 1314 form the Laminin G-like 6 domain; it reads TTYIFGKGGG…NPNIKINGSV (201 aa). Disordered regions lie at residues 1345–1366, 1442–1479, and 1520–1557; these read TMSTTTTRKHRTPPTIQTTDDM, LSDGGSDDCGDDDDDDDDDGLMISGYGSGEAYDSNLPP, and PNKVFDSGRTTTASFSPKLSRSTTTSTPPKLPAGKMNH. Positions 1446 to 1461 are enriched in acidic residues; it reads GSDDCGDDDDDDDDDG. Residues 1527–1547 show a composition bias toward polar residues; sequence GRTTTASFSPKLSRSTTTSTP. Residues 1623–1643 traverse the membrane as a helical segment; the sequence is GMVVGIVAAAALCILILLYAM. The Cytoplasmic segment spans residues 1644–1697; it reads YKYRNRDEGSYQVDETRNYITNSAQSNGAVMKDKQQSTKSGNKKQKNKDKEYYV. Positions 1665–1697 are disordered; that stretch reads NSAQSNGAVMKDKQQSTKSGNKKQKNKDKEYYV.

It belongs to the neurexin family.

It is found in the membrane. Functionally, neuronal cell surface protein that may be involved in cell recognition and cell adhesion. The polypeptide is Neurexin-3a (nrxn3a) (Danio rerio (Zebrafish)).